Here is a 497-residue protein sequence, read N- to C-terminus: Probable cytosol aminopeptidase (497 aa).

Mn(2+) is bound by residues Lys265 and Asp270. Residue Lys277 is part of the active site. Asp288, Asp347, and Glu349 together coordinate Mn(2+). Residue Arg351 is part of the active site.

This sequence belongs to the peptidase M17 family. The cofactor is Mn(2+).

It localises to the cytoplasm. It carries out the reaction Release of an N-terminal amino acid, Xaa-|-Yaa-, in which Xaa is preferably Leu, but may be other amino acids including Pro although not Arg or Lys, and Yaa may be Pro. Amino acid amides and methyl esters are also readily hydrolyzed, but rates on arylamides are exceedingly low.. The enzyme catalyses Release of an N-terminal amino acid, preferentially leucine, but not glutamic or aspartic acids.. Its function is as follows. Presumably involved in the processing and regular turnover of intracellular proteins. Catalyzes the removal of unsubstituted N-terminal amino acids from various peptides. This Geobacillus thermodenitrificans (strain NG80-2) protein is Probable cytosol aminopeptidase.